Reading from the N-terminus, the 151-residue chain is Nucleoside diphosphate kinase (151 aa).

Lys10, Phe58, Arg86, Thr92, Arg103, and Asn113 together coordinate ATP. The Pros-phosphohistidine intermediate role is filled by His116.

It belongs to the NDK family. As to quaternary structure, homotetramer. Mg(2+) serves as cofactor.

Its subcellular location is the cytoplasm. The catalysed reaction is dZDP + ATP = dZTP + ADP. It catalyses the reaction a 2'-deoxyribonucleoside 5'-diphosphate + ATP = a 2'-deoxyribonucleoside 5'-triphosphate + ADP. The enzyme catalyses a ribonucleoside 5'-diphosphate + ATP = a ribonucleoside 5'-triphosphate + ADP. Its pathway is purine metabolism. Functionally, major role in the synthesis of nucleoside triphosphates other than ATP. The ATP gamma phosphate is transferred to the NDP beta phosphate via a ping-pong mechanism, using a phosphorylated active-site intermediate. Its function is as follows. (Microbial infection) Catalyzes the phosphorylation of dZDP to dZTP, when the bacterium is infected by a phage that produces the substrate for the synthesis of dZTP (2- amino-2'-deoxyadenosine 5'-triphosphate), which is then used by the phage as a DNA polymerase substrate. The polypeptide is Nucleoside diphosphate kinase (Synechococcus sp. (strain CC9902)).